The chain runs to 250 residues: Ribosome-inactivating protein luffin-B (250 aa).

Residue Glu-160 is part of the active site.

The protein belongs to the ribosome-inactivating protein family. Type 1 RIP subfamily.

It carries out the reaction Endohydrolysis of the N-glycosidic bond at one specific adenosine on the 28S rRNA.. In Luffa aegyptiaca (Sponge gourd), this protein is Ribosome-inactivating protein luffin-B.